Reading from the N-terminus, the 278-residue chain is 3-methyl-2-oxobutanoate hydroxymethyltransferase (278 aa).

Mg(2+) is bound by residues Asp-43 and Asp-82. Residues 43 to 44 (DS), Asp-82, and Lys-112 each bind 3-methyl-2-oxobutanoate. Glu-114 is a Mg(2+) binding site. The active-site Proton acceptor is the Glu-181.

This sequence belongs to the PanB family. In terms of assembly, homodecamer; pentamer of dimers. Mg(2+) is required as a cofactor.

The protein resides in the cytoplasm. The enzyme catalyses 3-methyl-2-oxobutanoate + (6R)-5,10-methylene-5,6,7,8-tetrahydrofolate + H2O = 2-dehydropantoate + (6S)-5,6,7,8-tetrahydrofolate. Its pathway is cofactor biosynthesis; (R)-pantothenate biosynthesis; (R)-pantoate from 3-methyl-2-oxobutanoate: step 1/2. Functionally, catalyzes the reversible reaction in which hydroxymethyl group from 5,10-methylenetetrahydrofolate is transferred onto alpha-ketoisovalerate to form ketopantoate. The sequence is that of 3-methyl-2-oxobutanoate hydroxymethyltransferase from Bacillus cereus (strain B4264).